Reading from the N-terminus, the 499-residue chain is Na(+)/H(+) antiporter NhaB (499 aa).

11 consecutive transmembrane segments (helical) span residues 33–53 (PVIF…EFIF), 66–86 (PGGL…HTVY), 89–109 (VSGN…IYFM), 128–148 (AILS…LDAL), 237–257 (FIEF…AGLI), 305–325 (AIVA…VGLI), 326–346 (GLTV…HQIG), 349–369 (FEEA…VGVI), 393–413 (MFFI…VATV), 449–469 (ATPN…APLI), and 477–497 (VWMA…MIVI).

This sequence belongs to the NhaB Na(+)/H(+) (TC 2.A.34) antiporter family.

The protein localises to the cell inner membrane. It catalyses the reaction 2 Na(+)(in) + 3 H(+)(out) = 2 Na(+)(out) + 3 H(+)(in). Functionally, na(+)/H(+) antiporter that extrudes sodium in exchange for external protons. The sequence is that of Na(+)/H(+) antiporter NhaB from Hahella chejuensis (strain KCTC 2396).